The following is a 1494-amino-acid chain: Ral GTPase-activating protein subunit beta (1494 aa).

Disordered regions lie at residues 355–437 and 709–738; these read PRSD…APRR and ENNL…PDSE. S359 is modified (phosphoserine). Phosphothreonine occurs at positions 363 and 379. Composition is skewed to polar residues over residues 369–381, 392–428, and 711–735; these read SMPQ…TTPP, NKAT…TSSE, and NLKS…PTTP. Phosphoserine is present on residues S421 and S720. T734 is subject to Phosphothreonine. In terms of domain architecture, Rap-GAP spans 1149–1392; that stretch reads IGYLDLLPCR…TTLEKEVPVI (244 aa). S1285 carries the phosphoserine modification. Residues 1312–1323 show a composition bias toward polar residues; it reads NLNSSQRLSPSS. The disordered stretch occupies residues 1312-1335; that stretch reads NLNSSQRLSPSSRMRKLPQGRPVP.

As to quaternary structure, component of the heterodimeric RalGAP1 complex with RALGAPA1 and of the heterodimeric RalGAP2 complex with RALGAPA2. Heterodimerization is required for activity. As to expression, highly expressed in brain, mostly in amygdala.

Its function is as follows. Non-catalytic subunit of the heterodimeric RalGAP1 and RalGAP2 complexes which act as GTPase activators for the Ras-like small GTPases RALA and RALB. This chain is Ral GTPase-activating protein subunit beta (RALGAPB), found in Homo sapiens (Human).